Here is a 61-residue protein sequence, read N- to C-terminus: Photosystem II assembly protein Psb34 (61 aa).

The chain crosses the membrane as a helical span at residues 36–56 (LIMAAITVVLVAGLIAVAVVA).

Belongs to the Psb34 family. In terms of assembly, part of the photosystem II (PSII) assembly intermediate RC47 complex (with D1, D2, CP47, PsbE, PsbF, PsbH, Psb27 and Psb28); minor amounts are found in other PSII complexes, including mature, dimeric PSII with PsbO and PsbV. No HliA or HliB are detected in any of these complexes. Its interaction with PSII requires both CP47 (psbB) and PsbH. HliA/HliB and Psb34 probably bind to a similar site on CP47; their binding seems to be mutually exclusive.

The protein localises to the cellular thylakoid membrane. Functionally, involved in photosystem II (PSII) assembly and/or repair. Probably involved in conversion of late PSII assembly intermediates into mature dimeric PSII, it may mediate the optimal equlibrium of HliA/HliB among the intermediates containing CP47 (psbB) to facilitate photoprotection during assembly. The protein is Photosystem II assembly protein Psb34 of Synechocystis sp. (strain ATCC 27184 / PCC 6803 / Kazusa).